Here is a 473-residue protein sequence, read N- to C-terminus: B box and SPRY domain-containing protein (473 aa).

The disordered stretch occupies residues 1 to 69 (MSADVSGTES…PKQGSERSQL (69 aa)). Positions 35-51 (KPGPGPEPRPESGPEPG) are enriched in pro residues. The B box-type zinc-finger motif lies at 65 to 113 (ERSQLCPEHFEPLSWFCLSERRPVCATCAGFGGRCHRHRIRRAEEHAEE). In terms of domain architecture, B30.2/SPRY spans 259 to 455 (SPLLTQLWAA…ISIVRGPLAT (197 aa)).

Interacts with YWHAZ/14-3-3 protein zeta. Interacts with TRPV5 and TRPV6. As to expression, according to PubMed:10978534, testis-specific. According to PubMed:16371431, broadly expressed.

It localises to the cytoplasm. It is found in the membrane. Functionally, may regulate epithelial calcium transport by inhibiting TRPV5 activity. This is B box and SPRY domain-containing protein (Bspry) from Mus musculus (Mouse).